The primary structure comprises 353 residues: Probable D-xylulose reductase A (353 aa).

Zn(2+) is bound by residues Cys-42, His-67, and Glu-68. Residue 177–182 (GAGPVG) coordinates NAD(+).

Belongs to the zinc-containing alcohol dehydrogenase family. It depends on Zn(2+) as a cofactor.

The enzyme catalyses xylitol + NAD(+) = D-xylulose + NADH + H(+). It functions in the pathway carbohydrate degradation; L-arabinose degradation via L-arabinitol; D-xylulose 5-phosphate from L-arabinose (fungal route): step 4/5. In terms of biological role, xylitol dehydrogenase which catalyzes the conversion of xylitol to D-xylulose. Xylose is a major component of hemicelluloses such as xylan. Most fungi utilize D-xylose via three enzymatic reactions, xylose reductase (XR), xylitol dehydrogenase (XDH), and xylulokinase, to form xylulose 5-phosphate, which enters pentose phosphate pathway. The chain is Probable D-xylulose reductase A (xdhA) from Aspergillus terreus (strain NIH 2624 / FGSC A1156).